The primary structure comprises 442 residues: tRNA-2-methylthio-N(6)-dimethylallyladenosine synthase (442 aa).

An MTTase N-terminal domain is found at K5–K122. Positions 14, 51, 85, 159, 163, and 166 each coordinate [4Fe-4S] cluster. A Radical SAM core domain is found at K145–I378. Residues R380 to I442 form the TRAM domain.

The protein belongs to the methylthiotransferase family. MiaB subfamily. As to quaternary structure, monomer. It depends on [4Fe-4S] cluster as a cofactor.

Its subcellular location is the cytoplasm. The enzyme catalyses N(6)-dimethylallyladenosine(37) in tRNA + (sulfur carrier)-SH + AH2 + 2 S-adenosyl-L-methionine = 2-methylsulfanyl-N(6)-dimethylallyladenosine(37) in tRNA + (sulfur carrier)-H + 5'-deoxyadenosine + L-methionine + A + S-adenosyl-L-homocysteine + 2 H(+). In terms of biological role, catalyzes the methylthiolation of N6-(dimethylallyl)adenosine (i(6)A), leading to the formation of 2-methylthio-N6-(dimethylallyl)adenosine (ms(2)i(6)A) at position 37 in tRNAs that read codons beginning with uridine. The protein is tRNA-2-methylthio-N(6)-dimethylallyladenosine synthase of Francisella tularensis subsp. holarctica (strain LVS).